We begin with the raw amino-acid sequence, 207 residues long: LexA repressor (207 aa).

The segment at residues 28 to 47 (VREIARRFRITPRGAQLHLV) is a DNA-binding region (H-T-H motif). Active-site for autocatalytic cleavage activity residues include S119 and K156.

The protein belongs to the peptidase S24 family. Homodimer.

It carries out the reaction Hydrolysis of Ala-|-Gly bond in repressor LexA.. Its function is as follows. Represses a number of genes involved in the response to DNA damage (SOS response), including recA and lexA. In the presence of single-stranded DNA, RecA interacts with LexA causing an autocatalytic cleavage which disrupts the DNA-binding part of LexA, leading to derepression of the SOS regulon and eventually DNA repair. The polypeptide is LexA repressor (Thermotoga neapolitana (strain ATCC 49049 / DSM 4359 / NBRC 107923 / NS-E)).